The following is a 345-amino-acid chain: Centromere protein L (345 aa).

Phosphoserine is present on residues Ser40 and Ser54.

The protein belongs to the CENP-L/IML3 family. In terms of assembly, component of the CENPA-CAD complex, composed of CENPI, CENPK, CENPL, CENPO, CENPP, CENPQ, CENPR and CENPS. The CENPA-CAD complex interacts with the CENPA-NAC complex, at least composed of CENPA, CENPC, CENPH, CENPM, CENPN, CENPT and CENPU.

The protein localises to the nucleus. Its subcellular location is the chromosome. The protein resides in the centromere. In terms of biological role, component of the CENPA-CAD (nucleosome distal) complex, a complex recruited to centromeres which is involved in assembly of kinetochore proteins, mitotic progression and chromosome segregation. May be involved in incorporation of newly synthesized CENPA into centromeres via its interaction with the CENPA-NAC complex. The sequence is that of Centromere protein L (Cenpl) from Rattus norvegicus (Rat).